A 475-amino-acid chain; its full sequence is Bifunctional protein HldE (475 aa).

The segment at 1–317 is ribokinase; it reads MQYSAQFNRA…ENAIHGRTTA (317 aa). 194-197 lines the ATP pocket; that stretch reads NMSE. Residue aspartate 263 is part of the active site. The tract at residues 343 to 475 is cytidylyltransferase; it reads MTNGCFDILH…VIKKIQQLKE (133 aa).

The protein in the N-terminal section; belongs to the carbohydrate kinase PfkB family. It in the C-terminal section; belongs to the cytidylyltransferase family. In terms of assembly, homodimer.

It carries out the reaction D-glycero-beta-D-manno-heptose 7-phosphate + ATP = D-glycero-beta-D-manno-heptose 1,7-bisphosphate + ADP + H(+). The catalysed reaction is D-glycero-beta-D-manno-heptose 1-phosphate + ATP + H(+) = ADP-D-glycero-beta-D-manno-heptose + diphosphate. It functions in the pathway nucleotide-sugar biosynthesis; ADP-L-glycero-beta-D-manno-heptose biosynthesis; ADP-L-glycero-beta-D-manno-heptose from D-glycero-beta-D-manno-heptose 7-phosphate: step 1/4. It participates in nucleotide-sugar biosynthesis; ADP-L-glycero-beta-D-manno-heptose biosynthesis; ADP-L-glycero-beta-D-manno-heptose from D-glycero-beta-D-manno-heptose 7-phosphate: step 3/4. Its function is as follows. Catalyzes the phosphorylation of D-glycero-D-manno-heptose 7-phosphate at the C-1 position to selectively form D-glycero-beta-D-manno-heptose-1,7-bisphosphate. Functionally, catalyzes the ADP transfer from ATP to D-glycero-beta-D-manno-heptose 1-phosphate, yielding ADP-D-glycero-beta-D-manno-heptose. This Histophilus somni (strain 129Pt) (Haemophilus somnus) protein is Bifunctional protein HldE.